The primary structure comprises 139 residues: Ribosome maturation factor RimP (139 aa).

It belongs to the RimP family.

The protein resides in the cytoplasm. Functionally, required for maturation of 30S ribosomal subunits. This is Ribosome maturation factor RimP from Syntrophomonas wolfei subsp. wolfei (strain DSM 2245B / Goettingen).